A 137-amino-acid chain; its full sequence is ATP synthase epsilon chain, chloroplastic (137 aa).

This sequence belongs to the ATPase epsilon chain family. As to quaternary structure, F-type ATPases have 2 components, CF(1) - the catalytic core - and CF(0) - the membrane proton channel. CF(1) has five subunits: alpha(3), beta(3), gamma(1), delta(1), epsilon(1). CF(0) has three main subunits: a, b and c.

It localises to the plastid. The protein resides in the chloroplast thylakoid membrane. Produces ATP from ADP in the presence of a proton gradient across the membrane. This is ATP synthase epsilon chain, chloroplastic from Agrostis stolonifera (Creeping bentgrass).